The following is a 421-amino-acid chain: Elongation factor 1-alpha (421 aa).

The 217-residue stretch at 4–220 (NRHQNLAVIG…NGLPVPQPPT (217 aa)) folds into the tr-type G domain. Residues 13–20 (GHVDHGKS) are G1. Residue 13-20 (GHVDHGKS) coordinates GTP. Mg(2+) is bound at residue Ser-20. The G2 stretch occupies residues 69 to 73 (GVTID). The tract at residues 90–93 (DCPG) is G3. Residues 90 to 94 (DCPGH) and 145 to 148 (NKMD) contribute to the GTP site. The G4 stretch occupies residues 145 to 148 (NKMD). The segment at 184-186 (SAF) is G5.

This sequence belongs to the TRAFAC class translation factor GTPase superfamily. Classic translation factor GTPase family. EF-Tu/EF-1A subfamily.

The protein localises to the cytoplasm. The enzyme catalyses GTP + H2O = GDP + phosphate + H(+). Functionally, GTP hydrolase that promotes the GTP-dependent binding of aminoacyl-tRNA to the A-site of ribosomes during protein biosynthesis. The sequence is that of Elongation factor 1-alpha from Halobacterium salinarum (strain ATCC 700922 / JCM 11081 / NRC-1) (Halobacterium halobium).